The following is a 173-amino-acid chain: Translationally-controlled tumor protein homolog (173 aa).

The TCTP domain maps to 1-173 (MIIFKDMITG…FKHGLEEEKV (173 aa)).

Belongs to the TCTP family. In terms of tissue distribution, expressed by the venom gland.

It is found in the secreted. Its function is as follows. Venom protein that causes edema, enhances vascular permeability and is likely related to the inflammatory activity of the venom. The chain is Translationally-controlled tumor protein homolog from Grammostola rosea (Chilean rose tarantula).